We begin with the raw amino-acid sequence, 430 residues long: ATP-dependent RNA helicase RhlB (430 aa).

Residues 9 to 37 carry the Q motif motif; it reads QKFSDFALHPQVIEALESKGFHNCTPIQA. Residues 40–219 form the Helicase ATP-binding domain; the sequence is LPLALSGRDV…FEQMNNAEYV (180 aa). Residue 53 to 60 participates in ATP binding; sequence AQTGTGKT. The short motif at 165–168 is the DEAD box element; the sequence is DEAD. The 146-residue stretch at 245 to 390 folds into the Helicase C-terminal domain; sequence RLLQTLLEEE…VSKYNSDALM (146 aa). The interval 392-430 is disordered; sequence DLPAPKRLTRPPRSNNGPRRHNNAPRRSGAPRNNRKRAD.

It belongs to the DEAD box helicase family. RhlB subfamily. As to quaternary structure, component of the RNA degradosome, which is a multiprotein complex involved in RNA processing and mRNA degradation.

The protein localises to the cytoplasm. The catalysed reaction is ATP + H2O = ADP + phosphate + H(+). Its function is as follows. DEAD-box RNA helicase involved in RNA degradation. Has RNA-dependent ATPase activity and unwinds double-stranded RNA. The chain is ATP-dependent RNA helicase RhlB from Pectobacterium carotovorum subsp. carotovorum (strain PC1).